The following is a 940-amino-acid chain: Bifunctional uridylyltransferase/uridylyl-removing enzyme (940 aa).

The tract at residues 1–379 (MPRRLRPTRL…PGARPKRKAL (379 aa)) is uridylyltransferase. Residues 380–736 (DVEGFYEDGG…GQVRPGSNAA (357 aa)) form a uridylyl-removing region. Positions 496 to 618 (VDEHTLRAVG…VENPERLRLL (123 aa)) constitute an HD domain. ACT domains follow at residues 737-821 (EVVI…PRRG) and 848-929 (VVEA…AARP).

The protein belongs to the GlnD family. The cofactor is Mg(2+).

The enzyme catalyses [protein-PII]-L-tyrosine + UTP = [protein-PII]-uridylyl-L-tyrosine + diphosphate. The catalysed reaction is [protein-PII]-uridylyl-L-tyrosine + H2O = [protein-PII]-L-tyrosine + UMP + H(+). Its activity is regulated as follows. Uridylyltransferase (UTase) activity is inhibited by glutamine, while glutamine activates uridylyl-removing (UR) activity. Functionally, modifies, by uridylylation and deuridylylation, the PII regulatory proteins (GlnB and homologs), in response to the nitrogen status of the cell that GlnD senses through the glutamine level. Under low glutamine levels, catalyzes the conversion of the PII proteins and UTP to PII-UMP and PPi, while under higher glutamine levels, GlnD hydrolyzes PII-UMP to PII and UMP (deuridylylation). Thus, controls uridylylation state and activity of the PII proteins, and plays an important role in the regulation of nitrogen assimilation and metabolism. This is Bifunctional uridylyltransferase/uridylyl-removing enzyme from Caulobacter vibrioides (strain ATCC 19089 / CIP 103742 / CB 15) (Caulobacter crescentus).